Consider the following 318-residue polypeptide: Probable plastid-lipid-associated protein 1, chloroplastic (318 aa).

The transit peptide at 1-55 (MATVPLFTQFPCKTLNPSSSNTKHQSKSPILLPINSINRRSEIGVSVHRPDFKIR) directs the protein to the chloroplast. Position 57 is a phosphothreonine (T57).

This sequence belongs to the PAP/fibrillin family. As to quaternary structure, interacts (via N-terminus) with ABI2. Expressed in flower buds. Detected in tapetal cells, endothecium and connective in anthers and in subepidermal cells in filaments.

It localises to the plastid. The protein localises to the chloroplast. It is found in the plastoglobule. The protein resides in the chloroplast thylakoid. Probably involved in light/cold stress-related jasmonate (JA) biosynthesis. Contributes to the protection of photosystem II (PSII) against light stress. This chain is Probable plastid-lipid-associated protein 1, chloroplastic (PAP1), found in Arabidopsis thaliana (Mouse-ear cress).